Consider the following 492-residue polypeptide: Signal transduction histidine-protein kinase/phosphatase MprB (492 aa).

Residues methionine 1 to methionine 27 lie on the Cytoplasmic side of the membrane. The chain crosses the membrane as a helical span at residues leucine 28–valine 48. Topologically, residues serine 49 to threonine 165 are extracellular. A helical membrane pass occupies residues valine 166 to alanine 186. An HAMP domain is found at arginine 187–glutamate 239. Topologically, residues arginine 187–glutamate 492 are cytoplasmic. Positions aspartate 247–arginine 467 constitute a Histidine kinase domain. The residue at position 250 (histidine 250) is a Phosphohistidine; by autocatalysis. The segment at aspartate 470 to glutamate 492 is disordered.

The cofactor is Mg(2+). It depends on Mn(2+) as a cofactor. Autophosphorylated.

The protein resides in the cell membrane. The enzyme catalyses ATP + protein L-histidine = ADP + protein N-phospho-L-histidine.. Its function is as follows. Member of the two-component regulatory system MprB/MprA which contributes to maintaining a balance among several systems involved in stress resistance and is required for establishment and maintenance of persistent infection in the host. In response to environmental signals MprB acts both as a membrane-associated protein kinase that undergoes autophosphorylation and subsequently transfers the phosphate to MprA, and a protein phosphatase that dephosphorylates phospho-MprA. This Mycolicibacterium smegmatis (strain ATCC 700084 / mc(2)155) (Mycobacterium smegmatis) protein is Signal transduction histidine-protein kinase/phosphatase MprB (mprB).